We begin with the raw amino-acid sequence, 689 residues long: Glycine--tRNA ligase beta subunit (689 aa).

Belongs to the class-II aminoacyl-tRNA synthetase family. Tetramer of two alpha and two beta subunits.

It localises to the cytoplasm. The enzyme catalyses tRNA(Gly) + glycine + ATP = glycyl-tRNA(Gly) + AMP + diphosphate. The sequence is that of Glycine--tRNA ligase beta subunit from Salmonella paratyphi C (strain RKS4594).